The following is a 575-amino-acid chain: Acyloxyacyl hydrolase (575 aa).

Residues 1-25 (MKSPWRILVVSPLLLLPLHSSTSRA) form the signal peptide. A propeptide spanning residues 26 to 34 (HDNQPGTIR) is cleaved from the precursor. The 82-residue stretch at 36–117 (DHYTCVGCVL…HTLEFCKQEP (82 aa)) folds into the Saposin B-type domain. The important for enzyme activity, localization to cytoplasmic vesicles, and protein stability stretch occupies residues 37 to 69 (HYTCVGCVLVVSVIEQLAQVHNSTVQASMERLC). 8 disulfides stabilise this stretch: C40–C113, C43–C107, C69–C82, C122–C453, C159–C168, C205–C229, C248–C328, and C375–C459. N58 is a glycosylation site (N-linked (GlcNAc...) asparagine). The segment at 172 to 176 (KLAIK) is lipopolysaccharide binding. Ca(2+)-binding residues include D183, D185, D187, Y189, D204, N206, D207, D209, V212, D222, D226, N228, N230, I232, and E244. N-linked (GlcNAc...) asparagine glycosylation occurs at N206. S262 is a catalytic residue. A glycan (N-linked (GlcNAc...) asparagine) is linked at N466.

Heterodimer of the large and small subunits; disulfide-linked. Ca(2+) is required as a cofactor. In terms of processing, cleaved into a large and a small subunit. The small subunit is N-glycosylated.

The protein resides in the secreted. It is found in the cytoplasmic vesicle. The catalysed reaction is a 3-(acyloxy)acyl derivative of bacterial toxin + H2O = a 3-hydroxyacyl derivative of bacterial toxin + a fatty acid + H(+). Removes the secondary (acyloxyacyl-linked) fatty acyl chains from the lipid A region of bacterial lipopolysaccharides (LPS). By breaking down LPS, terminates the host response to bacterial infection and prevents prolonged and damaging inflammatory responses. In peritoneal macrophages, seems to be important for recovery from a state of immune tolerance following infection by Gram-negative bacteria. In Oryctolagus cuniculus (Rabbit), this protein is Acyloxyacyl hydrolase.